We begin with the raw amino-acid sequence, 448 residues long: FAD-linked oxidoreductase nodO (448 aa).

Residues 35 to 206 form the FAD-binding PCMH-type domain; that stretch reads PEHFPLAIVK…IRFFLKTCPL (172 aa).

Belongs to the oxygen-dependent FAD-linked oxidoreductase family. FAD serves as cofactor.

It participates in secondary metabolite biosynthesis. Its function is as follows. FAD-linked oxidoreductase; part of the gene cluster that mediates the biosynthesis of the indole diterpenes nodulisporic acids (NA). Nodulisporic acid A (NAA) and its chemically modified derivatives are of particular significance because of their highly potent insecticidal activity against blood-feeding arthropods and lack of observable adverse effects on mammals, in particular the tremogenicity associated with the paspaline-derived IDTs is not observed. The geranylgeranyl diphosphate (GGPP) synthase ggs1, localized outside of the cluster, is proposed to catalyze the first step in nodulisporic acid biosynthesis via conversion of farnesyl pyrophosphate and isopentyl pyrophosphate into geranylgeranyl pyrophosphate (GGPP). Condensation of indole-3-glycerol phosphate with GGPP by the prenyl transferase nodC then forms 3-geranylgeranylindole (3-GGI). Epoxidation by the FAD-dependent monooxygenase nodM leads to a single-epoxidized-GGI that is substrate of the terpene cyclase nodB for cyclization to yield emindole SB. The terminal methyl carbon, C28, of emindole SB is then oxidized by the cytochrome P450 monooxygenase nodW to produce nodulisporic acid F (NAF), the pentacyclic core of NAA. NAF is converted to nodulisporic acid E (NAE) via prenylation. This step is probably performed by one of the indole diterpene prenyltransferases nodD1 or nodD2. Several oxidation steps performed by the FAD-linked oxidoreductase nodO and one of the cytochrome P450 monooxygenase nodR, nodX or nodZ further convert NAE to nodulisporic acid D (NAD). NAD is substrate of cytochrome P450 monooxygenase nodJ to produce the precursor of nodulisporic acid C (NAC), converted to NAC by one of the indole diterpene prenyltransferases nodD1 or nodD2. The FAD-dependent monooxygenase nodY2 then oxidizes NAC to nodulisporic acid B (NAB). Finally NAB is converted to NAA by one of the cytochrome P450 monooxygenases nodR, nodX or nodZ. The protein is FAD-linked oxidoreductase nodO of Hypoxylon pulicicidum.